Consider the following 431-residue polypeptide: 5-methylthioadenosine/S-adenosylhomocysteine deaminase (431 aa).

His-63 and His-65 together coordinate Zn(2+). Substrate is bound by residues Glu-92, Arg-144, and His-184. Residue His-211 coordinates Zn(2+). Substrate is bound by residues Glu-214 and Asp-299. Asp-299 is a binding site for Zn(2+).

The protein belongs to the metallo-dependent hydrolases superfamily. MTA/SAH deaminase family. It depends on Zn(2+) as a cofactor.

The catalysed reaction is S-adenosyl-L-homocysteine + H2O + H(+) = S-inosyl-L-homocysteine + NH4(+). It catalyses the reaction S-methyl-5'-thioadenosine + H2O + H(+) = S-methyl-5'-thioinosine + NH4(+). Functionally, catalyzes the deamination of 5-methylthioadenosine and S-adenosyl-L-homocysteine into 5-methylthioinosine and S-inosyl-L-homocysteine, respectively. Is also able to deaminate adenosine. This is 5-methylthioadenosine/S-adenosylhomocysteine deaminase from Thermoanaerobacter pseudethanolicus (strain ATCC 33223 / 39E) (Clostridium thermohydrosulfuricum).